The chain runs to 295 residues: Acetaldehyde dehydrogenase 2 (295 aa).

NAD(+) is bound at residue 17-20 (TGNI). Cysteine 132 functions as the Acyl-thioester intermediate in the catalytic mechanism. NAD(+) is bound by residues 164–172 (SVGPASRAN) and asparagine 275.

This sequence belongs to the acetaldehyde dehydrogenase family.

It carries out the reaction acetaldehyde + NAD(+) + CoA = acetyl-CoA + NADH + H(+). In Salinispora arenicola (strain CNS-205), this protein is Acetaldehyde dehydrogenase 2.